The chain runs to 952 residues: Protein translocase subunit SecA (952 aa).

ATP is bound by residues Gln135, 153 to 157, and Asp575; that span reads GEGKT. Residues 916–930 are compositionally biased toward low complexity; it reads VSAKAATQPAAPAAK. Positions 916-952 are disordered; sequence VSAKAATQPAAPAAKEVGRNDPCPCGSGKKYKKCCGK. 4 residues coordinate Zn(2+): Cys938, Cys940, Cys949, and Cys950.

It belongs to the SecA family. As to quaternary structure, monomer and homodimer. Part of the essential Sec protein translocation apparatus which comprises SecA, SecYEG and auxiliary proteins SecDF. Other proteins may also be involved. Requires Zn(2+) as cofactor.

Its subcellular location is the cell membrane. The protein resides in the cytoplasm. The catalysed reaction is ATP + H2O + cellular proteinSide 1 = ADP + phosphate + cellular proteinSide 2.. Functionally, part of the Sec protein translocase complex. Interacts with the SecYEG preprotein conducting channel. Has a central role in coupling the hydrolysis of ATP to the transfer of proteins into and across the cell membrane, serving as an ATP-driven molecular motor driving the stepwise translocation of polypeptide chains across the membrane. This Dehalococcoides mccartyi (strain ATCC BAA-2266 / KCTC 15142 / 195) (Dehalococcoides ethenogenes (strain 195)) protein is Protein translocase subunit SecA.